We begin with the raw amino-acid sequence, 380 residues long: MTNLRKTHPLLKIANDALVDLPAPANISVWWNFGSLLGLCLITQIATGLFLAMHYTSDIATAFSSVAHICRDVNYGWLIRNLHANGASFFFICIYLHIGRGLYYGSYLYKETWNVGVILLLLVMMTAFVGYVLPWGQMSFWGATVITNLLSAVPYVGNSLVQWIWGGFSVDNATLTRFFAFHFLLPFIIAAATVIHLLFLHETGSNNPTGLNSDADKISFHPYFSYKDLLGFAALLIALTSLALFSPNLLGDPDNFTPANPLVTPPHIKPEWYFLFAYAILRSIPNKLGGVLALLFSILVLMLVPILHTSKQRGLTFRPITQFLFWTLVADVIILTWIGGMPVEHPFIIIGQIASFLYFFLFLVLTPLAGWLENKALEWS.

A run of 4 helical transmembrane segments spans residues 33–53 (FGSL…FLAM), 77–98 (WLIR…YLHI), 113–133 (WNVG…GYVL), and 178–198 (FFAF…IHLL). Positions 83 and 97 each coordinate heme b. 2 residues coordinate heme b: histidine 182 and histidine 196. Residue histidine 201 coordinates a ubiquinone. 4 helical membrane passes run 226–246 (YKDL…ALFS), 288–308 (LGGV…PILH), 320–340 (ITQF…WIGG), and 347–367 (FIII…VLTP).

It belongs to the cytochrome b family. In terms of assembly, the cytochrome bc1 complex contains 3 respiratory subunits (MT-CYB, CYC1 and UQCRFS1), 2 core proteins (UQCRC1 and UQCRC2) and probably 6 low-molecular weight proteins. Heme b serves as cofactor.

The protein localises to the mitochondrion inner membrane. Its function is as follows. Component of the ubiquinol-cytochrome c reductase complex (complex III or cytochrome b-c1 complex) that is part of the mitochondrial respiratory chain. The b-c1 complex mediates electron transfer from ubiquinol to cytochrome c. Contributes to the generation of a proton gradient across the mitochondrial membrane that is then used for ATP synthesis. The chain is Cytochrome b (mt-cyb) from Dactyloptena peterseni (Starry flying gurnard).